Reading from the N-terminus, the 358-residue chain is Magnesium-protoporphyrin IX monomethyl ester [oxidative] cyclase (358 aa).

This sequence belongs to the AcsF family. Fe cation serves as cofactor.

The enzyme catalyses Mg-protoporphyrin IX 13-monomethyl ester + 3 NADPH + 3 O2 + 2 H(+) = 3,8-divinyl protochlorophyllide a + 3 NADP(+) + 5 H2O. The protein operates within porphyrin-containing compound metabolism; chlorophyll biosynthesis (light-independent). Catalyzes the formation of the isocyclic ring in chlorophyll biosynthesis. Mediates the cyclase reaction, which results in the formation of divinylprotochlorophyllide (Pchlide) characteristic of all chlorophylls from magnesium-protoporphyrin IX 13-monomethyl ester (MgPMME). This chain is Magnesium-protoporphyrin IX monomethyl ester [oxidative] cyclase, found in Trichodesmium erythraeum (strain IMS101).